A 445-amino-acid chain; its full sequence is Probable aminotransferase TAT3 (445 aa).

Belongs to the class-I pyridoxal-phosphate-dependent aminotransferase family. Pyridoxal 5'-phosphate serves as cofactor. Expressed in roots, leaves and cauline leaves.

The chain is Probable aminotransferase TAT3 (TAT3) from Arabidopsis thaliana (Mouse-ear cress).